Consider the following 238-residue polypeptide: Adapter protein MecA (238 aa).

The segment covering Q120–R136 has biased composition (basic and acidic residues). Positions Q120–T139 are disordered.

Belongs to the MecA family. In terms of assembly, homodimer.

Functionally, enables the recognition and targeting of unfolded and aggregated proteins to the ClpC protease or to other proteins involved in proteolysis. The chain is Adapter protein MecA from Staphylococcus saprophyticus subsp. saprophyticus (strain ATCC 15305 / DSM 20229 / NCIMB 8711 / NCTC 7292 / S-41).